The primary structure comprises 175 residues: Crossover junction endodeoxyribonuclease RuvC (175 aa).

Active-site residues include Asp8, Glu68, and Asp140. Positions 8, 68, and 140 each coordinate Mg(2+).

It belongs to the RuvC family. Homodimer which binds Holliday junction (HJ) DNA. The HJ becomes 2-fold symmetrical on binding to RuvC with unstacked arms; it has a different conformation from HJ DNA in complex with RuvA. In the full resolvosome a probable DNA-RuvA(4)-RuvB(12)-RuvC(2) complex forms which resolves the HJ. Mg(2+) is required as a cofactor.

Its subcellular location is the cytoplasm. It carries out the reaction Endonucleolytic cleavage at a junction such as a reciprocal single-stranded crossover between two homologous DNA duplexes (Holliday junction).. In terms of biological role, the RuvA-RuvB-RuvC complex processes Holliday junction (HJ) DNA during genetic recombination and DNA repair. Endonuclease that resolves HJ intermediates. Cleaves cruciform DNA by making single-stranded nicks across the HJ at symmetrical positions within the homologous arms, yielding a 5'-phosphate and a 3'-hydroxyl group; requires a central core of homology in the junction. The consensus cleavage sequence is 5'-(A/T)TT(C/G)-3'. Cleavage occurs on the 3'-side of the TT dinucleotide at the point of strand exchange. HJ branch migration catalyzed by RuvA-RuvB allows RuvC to scan DNA until it finds its consensus sequence, where it cleaves and resolves the cruciform DNA. The sequence is that of Crossover junction endodeoxyribonuclease RuvC from Pseudomonas fluorescens (strain Pf0-1).